The sequence spans 713 residues: MAEELITPVYCTGVSAQVQKQRDKELGLGRHENAIKYLGQDYENLRARCLQNGVLFQDDAFPPVSHSLGFKELGPNSSKTYGIKWKRPTELLSNPQFIVDGATRTDICQGALGDCWLLAAIASLTLNETILHRVVPYGQSFQEGYAGIFHFQLWQFGEWVDVVVDDLLPTKDGKLVFVHSAQGNEFWSALLEKAYAKVNGSYEALSGGCTSEAFEDFTGGVTEWYDLQKAPSDLYQIILKALERGSLLGCSINISDIRDLEAITFKNLVRGHAYSVTDAKQVTYQGQRVNLIRMRNPWGEVEWKGPWSDNSYEWNKVDPYEREQLRVKMEDGEFWMSFRDFIREFTKLEICNLTPDALKSRTLRNWNTTFYEGTWRRGSTAGGCRNYPATFWVNPQFKIRLEEVDDADDYDSRESGCSFLLALMQKHRRRERRFGRDMETIGFAVYQVPRELAGQPVHLKRDFFLANASRAQSEHFINLREVSNRIRLPPGEYIVVPSTFEPNKEGDFLLRFFSEKKAGTQELDDQIQANLPDEKVLSEEEIDDNFKTLFSKLAGDDMEISVKELQTILNRIISKHKDLRTNGFSLESCRSMVNLMDRDGNGKLGLVEFNILWNRIRNYLTIFRKFDLDKSGSMSAYEMRMAIEAAGFKLNKKLHELIITRYSEPDLAVDFDNFVCCLVRLETMFRFFKILDTDLDGVVTFDLFKWLQLTMFA.

One can recognise a Calpain catalytic domain in the interval 55 to 354 (LFQDDAFPPV…FTKLEICNLT (300 aa)). Residues Cys115, His272, and Asn296 contribute to the active site. Thr354 carries the post-translational modification Phosphothreonine. A domain III region spans residues 355-525 (PDALKSRTLR…KKAGTQELDD (171 aa)). Positions 526-541 (QIQANLPDEKVLSEEE) are linker. The segment at 542-712 (IDDNFKTLFS…LFKWLQLTMF (171 aa)) is domain IV. 4 EF-hand domains span residues 557–575 (DMEI…IISK), 584–609 (FSLE…LVEF), 614–649 (NRIR…AGFK), and 679–713 (VRLE…TMFA). Positions 597, 599, 601, 603, 608, 627, 629, 631, 633, and 638 each coordinate Ca(2+).

It belongs to the peptidase C2 family. In terms of assembly, forms a heterodimer with a small (regulatory) subunit CAPNS1. Ca(2+) serves as cofactor. Undergoes calcium-induced successive autoproteolytic cleavages that generate a membrane-bound 78 kDa active form and an intracellular 75 kDa active form. Calpastatin reduces with high efficiency the transition from 78 kDa to 75 kDa calpain forms.

Its subcellular location is the cytoplasm. It localises to the cell membrane. The catalysed reaction is Broad endopeptidase specificity.. With respect to regulation, activated by micromolar concentrations of calcium and inhibited by calpastatin. Calcium-regulated non-lysosomal thiol-protease which catalyzes limited proteolysis of substrates involved in cytoskeletal remodeling and signal transduction. Proteolytically cleaves CTBP1 at 'Asn-364', 'Gly-377' and 'His-399'. Cleaves and activates caspase-7 (CASP7). This chain is Calpain-1 catalytic subunit, found in Rattus norvegicus (Rat).